Consider the following 216-residue polypeptide: Protein-L-isoaspartate O-methyltransferase (216 aa).

Residue Ser-66 is part of the active site.

This sequence belongs to the methyltransferase superfamily. L-isoaspartyl/D-aspartyl protein methyltransferase family.

The protein localises to the cytoplasm. The catalysed reaction is [protein]-L-isoaspartate + S-adenosyl-L-methionine = [protein]-L-isoaspartate alpha-methyl ester + S-adenosyl-L-homocysteine. In terms of biological role, catalyzes the methyl esterification of L-isoaspartyl residues in peptides and proteins that result from spontaneous decomposition of normal L-aspartyl and L-asparaginyl residues. It plays a role in the repair and/or degradation of damaged proteins. This chain is Protein-L-isoaspartate O-methyltransferase, found in Colwellia psychrerythraea (strain 34H / ATCC BAA-681) (Vibrio psychroerythus).